Reading from the N-terminus, the 519-residue chain is Histidine ammonia-lyase (519 aa).

The segment at residues 146 to 148 is a cross-link (5-imidazolinone (Ala-Gly)); it reads ASG. A 2,3-didehydroalanine (Ser) modification is found at serine 147.

It belongs to the PAL/histidase family. Contains an active site 4-methylidene-imidazol-5-one (MIO), which is formed autocatalytically by cyclization and dehydration of residues Ala-Ser-Gly.

It is found in the cytoplasm. The catalysed reaction is L-histidine = trans-urocanate + NH4(+). It functions in the pathway amino-acid degradation; L-histidine degradation into L-glutamate; N-formimidoyl-L-glutamate from L-histidine: step 1/3. The chain is Histidine ammonia-lyase from Psychrobacter sp. (strain PRwf-1).